Here is a 471-residue protein sequence, read N- to C-terminus: DnaJ protein P58IPK homolog B (471 aa).

The first 24 residues, 1–24 (MARWPWRWRVLLPLLLLHSSPVFA), serve as a signal peptide directing secretion. 8 TPR repeats span residues 32-65 (PSTL…DPNH), 66-99 (SEAY…KPGS), 112-146 (AQNA…SPNC), 148-180 (KAKL…DEDN), 181-214 (LDAL…DPEH), 227-260 (LLKK…DPDH), 265-298 (VHLY…DGEL), and 300-332 (DALT…SPQD). Asparagine 64 carries an N-linked (GlcNAc...) asparagine glycan. The region spanning 353 to 419 (DWYKILGISK…DKRVRYDRGE (67 aa)) is the J domain.

Interacts with BIP1.

Its subcellular location is the endoplasmic reticulum lumen. Functionally, may play a role in protein folding in the endoplasmic reticulum. The polypeptide is DnaJ protein P58IPK homolog B (Oryza sativa subsp. japonica (Rice)).